The chain runs to 382 residues: Mannan endo-1,4-beta-mannosidase (382 aa).

The signal sequence occupies residues 1–19; that stretch reads MVKLFSFLLLVWVASPAFS. Substrate contacts are provided by residues Trp-83, Asn-144, 147–151, and Asn-180; that span reads WDESK. Glu-181 acts as the Proton donor/acceptor in catalysis. Positions 187, 204, 208, 243, 282, and 284 each coordinate substrate. The cysteines at positions 195 and 262 are disulfide-linked. Glu-312 (nucleophile) is an active-site residue. Cys-317 and Cys-349 are oxidised to a cystine. Substrate-binding residues include Trp-341 and Asp-348. Residues 346 to 350 form an involved in stabilization of the transition state region; sequence GGDCS.

The protein belongs to the glycosyl hydrolase 5 (cellulase A) family. In terms of assembly, monomer.

Its subcellular location is the secreted. The catalysed reaction is Random hydrolysis of (1-&gt;4)-beta-D-mannosidic linkages in mannans, galactomannans and glucomannans.. Its activity is regulated as follows. Activated particularly by Ca(2+) and Zn(2+), and to a lesser extent by Na(+), K(+), Mg(2+) and Cu(2+). Activation effect of the divalent metal ions Ca(2+), Zn(2+), Mg(2+) and Cu(2+) is reduced significantly by the addition of EDTA. Strongly inhibited by Mn(2+), Hg(2+) and Ag(+). Hydrolyzes 1,4-beta linked polysaccharide backbones of mannans. Has high activity toward locust bean gum. Also active toward konjac and beta-1,4-mannan. Hydrolyzes mannotetraose (M4) and mannopentaose (M5) to mannobiose (M2) and mannotriose (M3) with a little production of mannose (M1). Hydrolyzes beta-1,4-mannan to M2, M3 and M4. Hardly hydrolyzes M2 and M3. Does not hydrolyze p-nitrophenyl-beta-D-mannopyranoside, gua-gum, carboxymethyl cellulose, soluble starch or laminarin. This Cryptopygus antarcticus (Antarctic springtail) protein is Mannan endo-1,4-beta-mannosidase.